The following is a 128-amino-acid chain: Large ribosomal subunit protein bL17 (128 aa).

Belongs to the bacterial ribosomal protein bL17 family. As to quaternary structure, part of the 50S ribosomal subunit. Contacts protein L32.

The polypeptide is Large ribosomal subunit protein bL17 (Streptococcus uberis (strain ATCC BAA-854 / 0140J)).